Here is a 249-residue protein sequence, read N- to C-terminus: UDP-N-acetyl-D-mannosaminuronic acid transferase (249 aa).

It belongs to the glycosyltransferase 26 family.

The catalysed reaction is UDP-N-acetyl-alpha-D-mannosaminouronate + N-acetyl-alpha-D-glucosaminyl-di-trans,octa-cis-undecaprenyl diphosphate = beta-D-ManNAcA-(1-&gt;4)-alpha-D-GlcNAc-di-trans,octa-cis-undecaprenyl diphosphate + UDP + H(+). It participates in bacterial outer membrane biogenesis; enterobacterial common antigen biosynthesis. Catalyzes the synthesis of Und-PP-GlcNAc-ManNAcA (Lipid II), the second lipid-linked intermediate involved in enterobacterial common antigen (ECA) synthesis. The sequence is that of UDP-N-acetyl-D-mannosaminuronic acid transferase from Pectobacterium carotovorum subsp. carotovorum (strain PC1).